A 328-amino-acid polypeptide reads, in one-letter code: Homoarginine-6-hydroxylase 2-ODD-233 (328 aa).

Residues 183-288 (FWVCRLIGYP…VSVAFFYESN (106 aa)) form the Fe2OG dioxygenase domain. Fe cation contacts are provided by H210, D212, and H268. Position 278 (R278) interacts with 2-oxoglutarate.

This sequence belongs to the iron/ascorbate-dependent oxidoreductase family. Fe(2+) serves as cofactor. It depends on L-ascorbate as a cofactor. In terms of tissue distribution, expressed in roots and shoots.

The protein localises to the cytoplasm. It carries out the reaction L-homoarginine + 2-oxoglutarate + O2 = 6-hydroxy-L-homoarginine + succinate + CO2. It catalyses the reaction melatonin + 2-oxoglutarate + O2 = 2-hydroxymelatonin + succinate + CO2. Its function is as follows. 2-oxoglutarate-dependent dioxygenase catalyzing homoarginine 6-hydroxylation thus producing 6-hydroxy-L-homoarginine. Guanidine (Gd) is in turn synthesized by the spontaneous conversion of 6-hydroxy-L-homoarginine to (S)-2-amino-6-oxohexanoate (RHEA:79843); guanidine is a nitrogen-rich compound that can serve as a defense or signaling substance. Involved in melatonin degradation. Catalyzes the hydroxylation of melatonin to produce 2-hydroxymelatonin. The chain is Homoarginine-6-hydroxylase 2-ODD-233 from Oryza sativa subsp. japonica (Rice).